A 138-amino-acid chain; its full sequence is Basic phospholipase A2 chain HDP-1P (138 aa).

Residues 1–16 form the signal peptide; it reads MRILWIVAVCLIGVEG. 7 disulfide bridges follow: C42–C131, C44–C60, C59–C111, C65–C138, C66–C104, C73–C97, and C91–C102. Ca(2+) is bound by residues Y43, G45, and G47. The active site involves H63. Residue D64 participates in Ca(2+) binding. Residue D105 is part of the active site.

As to quaternary structure, heterodimer; non-covalently linked. The toxic basic protein has phospholipase A2 activity (chain HDP-1P) and the non-toxic acidic protein functions as its inhibitor (chain HPD-1I (AC A4VBF0)). The cofactor is Ca(2+). Expressed by the venom gland.

The protein localises to the secreted. It catalyses the reaction a 1,2-diacyl-sn-glycero-3-phosphocholine + H2O = a 1-acyl-sn-glycero-3-phosphocholine + a fatty acid + H(+). With respect to regulation, enzymatic activity and neurotoxicity are inhibited by Triton X-100, which has been determined to be located in the center of the hydrophobic channel of the enzyme. Functionally, heterodimer: shows the same activities as the monomer, but with a lower potency. In terms of biological role, monomer: snake venom phospholipase A2 (PLA2) that shows presynaptic neurotoxicity, anticoagulant activity and that weakly inhibits ADP-induced platelet aggregation. Inhibits exocytosis in pancreatic beta cells, confirming it can act presynaptically in inhibiting the exocytosis of neurotransmitters in neurons. PLA2 catalyzes the calcium-dependent hydrolysis of the 2-acyl groups in 3-sn-phosphoglycerides. The polypeptide is Basic phospholipase A2 chain HDP-1P (Vipera nikolskii (Nikolsky's adder)).